Reading from the N-terminus, the 174-residue chain is Disulfide bond formation protein B (174 aa).

The Cytoplasmic segment spans residues 1 to 14; sequence MLNFLNICSKTRKS. The helical transmembrane segment at 15–31 threads the bilayer; the sequence is WVLLIFTVVILELIALY. The Periplasmic portion of the chain corresponds to 32-49; sequence LQHIVLIKPCVLCVYQRC. Cys41 and Cys44 are disulfide-bonded. Residues 50–65 form a helical membrane-spanning segment; sequence ALCGIGIAGLIGTIAP. At 66 to 71 the chain is on the cytoplasmic side; that stretch reads FTPLRF. Residues 72–89 form a helical membrane-spanning segment; the sequence is FSIPIWIYSAWKGLLLAK. At 90–144 the chain is on the periplasmic side; sequence EYTDIQLHPSPFFMCDLFVQFPHWLPLNKWWPSMFDADGDCAEYKWYFLSLEISQ. Cys104 and Cys130 are joined by a disulfide. Residues 145 to 163 form a helical membrane-spanning segment; sequence WMLIIFANYLIIAILVSLS. At 164–174 the chain is on the cytoplasmic side; that stretch reads QIIDLKKWNNK.

Belongs to the DsbB family.

The protein localises to the cell inner membrane. In terms of biological role, required for disulfide bond formation in some periplasmic proteins. Acts by oxidizing the DsbA protein. This is Disulfide bond formation protein B from Blochmanniella pennsylvanica (strain BPEN).